A 280-amino-acid polypeptide reads, in one-letter code: Cycloeucalenol cycloisomerase (280 aa).

6 helical membrane passes run 22–42 (LFFL…VVPY), 53–73 (YLLL…LLVG), 89–109 (ANLW…HYFF), 167–187 (FEAA…TIAI), 201–221 (MYRV…PMFF), and 244–264 (AMLV…IVPL).

It localises to the membrane. The catalysed reaction is cycloeucalenol = obtusifoliol. Functionally, converts pentacyclic cyclopropyl sterols to tetracyclic sterols. This is Cycloeucalenol cycloisomerase (CPI1) from Arabidopsis thaliana (Mouse-ear cress).